We begin with the raw amino-acid sequence, 214 residues long: Urease accessory protein UreG (214 aa).

Residue 23-30 coordinates GTP; sequence GPVGSGKT.

The protein belongs to the SIMIBI class G3E GTPase family. UreG subfamily. Homodimer. UreD, UreF and UreG form a complex that acts as a GTP-hydrolysis-dependent molecular chaperone, activating the urease apoprotein by helping to assemble the nickel containing metallocenter of UreC. The UreE protein probably delivers the nickel.

The protein localises to the cytoplasm. In terms of biological role, facilitates the functional incorporation of the urease nickel metallocenter. This process requires GTP hydrolysis, probably effectuated by UreG. This Bordetella bronchiseptica (strain ATCC BAA-588 / NCTC 13252 / RB50) (Alcaligenes bronchisepticus) protein is Urease accessory protein UreG.